The primary structure comprises 156 residues: Myosin regulatory light chain, striated adductor muscle (156 aa).

Ala1 carries the blocked amino end (Ala) modification. EF-hand domains lie at 15-50 and 84-119; these read KQIQ…LGRT and DSEE…MGDN. Residues Asp28, Asp30, Asp32, and Asp39 each contribute to the Ca(2+) site.

In terms of biological role, in molluscan muscle, calcium regulation is associated with myosin rather than with actin. Muscle myosin contains two types of light chains: the catalytic light chain, essential for ATPase activity, and the regulatory light chain, a calcium-binding protein responsible for Ca(2+) dependent binding and Ca(2+) dependent Mg-ATPase activity. The chain is Myosin regulatory light chain, striated adductor muscle from Chlamys nipponensis akazara (Akazara scallop).